The primary structure comprises 88 residues: Small ribosomal subunit protein bS20 (88 aa).

Positions 1-26 (MANTAQARKRARQNTKRRQNSASQRS) are disordered. The span at 7–19 (ARKRARQNTKRRQ) shows a compositional bias: basic residues.

This sequence belongs to the bacterial ribosomal protein bS20 family.

In terms of biological role, binds directly to 16S ribosomal RNA. The polypeptide is Small ribosomal subunit protein bS20 (Psychrobacter arcticus (strain DSM 17307 / VKM B-2377 / 273-4)).